A 569-amino-acid polypeptide reads, in one-letter code: 4-coumarate-CoA ligase 2 (569 aa).

The tract at residues 1–24 is disordered; that stretch reads MITIAESHPQIHHSPPDTTAPSTP. Residues 216–220, His-265, 337–339, 359–360, Thr-364, Asp-448, Arg-463, and Lys-554 contribute to the ATP site; these read SSGTT, AAP, and QG. Positions 290-359 are SBD1; it reads EMEGMLETIQ…GRLPQAVLGQ (70 aa). Residues 360–427 are SBD2; that stretch reads GYGMTEAGPV…VRGPQIMKGY (68 aa).

It belongs to the ATP-dependent AMP-binding enzyme family. As to expression, mostly expressed in stems, and, to a lower extent, in bulbs.

The enzyme catalyses (E)-4-coumarate + ATP + CoA = (E)-4-coumaroyl-CoA + AMP + diphosphate. It functions in the pathway phytoalexin biosynthesis; 3,4',5-trihydroxystilbene biosynthesis; 3,4',5-trihydroxystilbene from trans-4-coumarate: step 1/2. Produces CoA thioesters of a variety of hydroxy- and methoxy-substituted cinnamic acids, which are used to synthesize several phenylpropanoid-derived compounds, including anthocyanins, flavonoids, isoflavonoids, coumarins, lignin, suberin and wall-bound phenolics. The protein is 4-coumarate-CoA ligase 2 of Narcissus pseudonarcissus (Daffodil).